The primary structure comprises 270 residues: Endonuclease 4 (270 aa).

Positions 69, 108, 139, 169, 172, 204, 217, 219, and 248 each coordinate Zn(2+).

The protein belongs to the AP endonuclease 2 family. Zn(2+) is required as a cofactor.

It catalyses the reaction Endonucleolytic cleavage to 5'-phosphooligonucleotide end-products.. Functionally, endonuclease IV plays a role in DNA repair. It cleaves phosphodiester bonds at apurinic or apyrimidinic (AP) sites, generating a 3'-hydroxyl group and a 5'-terminal sugar phosphate. In addition, possesses a 3'-5' exonuclease activity. The chain is Endonuclease 4 from Thermus thermophilus (strain ATCC BAA-163 / DSM 7039 / HB27).